The sequence spans 1093 residues: Phosphorylase b kinase regulatory subunit beta (1093 aa).

Ala2 carries the post-translational modification N-acetylalanine. The residue at position 4 (Ala4) is a Phosphoserine. Residues 7–29 form a calmodulin-binding region; it reads LTAEVSWKVLERRARTKRSGSVY. Residue Ser12 is modified to Phosphoserine; by autocatalysis. Ser27 and Ser701 each carry phosphoserine. Positions 689-716 are disordered; that stretch reads EPPKHSKVKRQSSTPSAPELGQQPDVNI. Calmodulin-binding stretches follow at residues 768 to 795 and 920 to 951; these read RVYR…FSSS and NGRC…ILER. Cys1090 carries S-farnesyl cysteine lipidation.

This sequence belongs to the phosphorylase b kinase regulatory chain family. In terms of assembly, hexadecamer of 4 heterotetramers, each composed of alpha, beta, gamma, and delta subunits. Alpha (PHKA1 or PHKA2) and beta (PHKB) are regulatory subunits, gamma (PHKG1 or PHKG2) is the catalytic subunit, and delta is calmodulin. In terms of processing, ser-701 is probably phosphorylated by PKA. Post-translationally, although the final Cys may be farnesylated, the terminal tripeptide is probably not removed, and the C-terminus is not methylated.

The protein localises to the cell membrane. It functions in the pathway glycan biosynthesis; glycogen metabolism. Its activity is regulated as follows. By phosphorylation of various serine residues. Phosphorylase b kinase catalyzes the phosphorylation of serine in certain substrates, including troponin I. The beta chain acts as a regulatory unit and modulates the activity of the holoenzyme in response to phosphorylation. The chain is Phosphorylase b kinase regulatory subunit beta (PHKB) from Homo sapiens (Human).